We begin with the raw amino-acid sequence, 383 residues long: Serine protease 23 (383 aa).

Residues 1–19 (MAGIPGLLFLLFFLLCAVG) form the signal peptide. Asn93 carries an N-linked (GlcNAc...) asparagine glycan. Ser109 is subject to Phosphoserine; by FAM20C. A disulfide bond links Cys160 and Cys176. His175 acts as the Charge relay system in catalysis. N-linked (GlcNAc...) asparagine glycosylation occurs at Asn207. Active-site charge relay system residues include Asp240 and Ser316.

It belongs to the peptidase S1 family.

The protein resides in the secreted. This Homo sapiens (Human) protein is Serine protease 23 (PRSS23).